Consider the following 286-residue polypeptide: Probable aquaporin PIP-type pTOM75 (286 aa).

Residues 1–35 (MAENKEEDVKLGANKFRETQPLGTAAQTDKDYKEP) are disordered. At 1 to 55 (MAENKEEDVKLGANKFRETQPLGTAAQTDKDYKEPPPAPLFEPGELSSWSFYRAG) the chain is on the cytoplasmic side. Over residues 7–18 (EDVKLGANKFRE) the composition is skewed to basic and acidic residues. Residues 56–76 (IAEFMATFLFLYITILTVMGL) traverse the membrane as a helical segment. The Extracellular portion of the chain corresponds to 77–89 (KRSDSLCSSVGIQ). Residues 90–110 (GVAWAFGGMIFALVYCTAGIS) traverse the membrane as a helical segment. Over 111–133 (GGHINPAVTFGLFLARKLSLTRA) the chain is Cytoplasmic. An NPA 1 motif is present at residues 115 to 117 (NPA). A helical membrane pass occupies residues 134–154 (VFYMVMQCLGAICGAGVVKGF). The Extracellular portion of the chain corresponds to 155–175 (MVGPYQRLGGGANVVNPGYTK). A helical transmembrane segment spans residues 176 to 196 (GDGLGAEIIGTFVLVYTVFSA). The Cytoplasmic portion of the chain corresponds to 197-209 (TDAKRNARDSHVP). The chain crosses the membrane as a helical span at residues 210–230 (ILAPLPIGFAVFLVHLATIPI). The Extracellular portion of the chain corresponds to 231–257 (TGTGINPARSLGAAIIYNDEHAWNDHW). The short motif at 236–238 (NPA) is the NPA 2 element. Residues 258–278 (IFWVGPMIGAALAAIYHQIII) traverse the membrane as a helical segment. Residues 279-286 (RAMPFHRS) lie on the Cytoplasmic side of the membrane.

This sequence belongs to the MIP/aquaporin (TC 1.A.8) family. PIP (TC 1.A.8.11) subfamily. Roots, ripening fruit and senescing leaves.

It localises to the cell membrane. Its function is as follows. Aquaporins facilitate the transport of water and small neutral solutes across cell membranes. The protein is Probable aquaporin PIP-type pTOM75 of Solanum lycopersicum (Tomato).